A 145-amino-acid polypeptide reads, in one-letter code: Large ribosomal subunit protein bL9 (145 aa).

The protein belongs to the bacterial ribosomal protein bL9 family.

Functionally, binds to the 23S rRNA. The polypeptide is Large ribosomal subunit protein bL9 (Ureaplasma urealyticum serovar 10 (strain ATCC 33699 / Western)).